The chain runs to 186 residues: Holliday junction branch migration complex subunit RuvA (186 aa).

A domain I region spans residues 1 to 63 (MNDYINGFLY…DNHFKYYGFF (63 aa)). A domain II region spans residues 64–137 (NQLVRDLFEI…QKELFNNKIS (74 aa)). Residue serine 137 is a region of interest, flexible linker. Positions 137-186 (SEKKNKVITSLEKLGYKTKDIYKIIINVDEDLTIDELTKYVLEKLSYINN) are domain III.

The protein belongs to the RuvA family. Homotetramer. Forms an RuvA(8)-RuvB(12)-Holliday junction (HJ) complex. HJ DNA is sandwiched between 2 RuvA tetramers; dsDNA enters through RuvA and exits via RuvB. An RuvB hexamer assembles on each DNA strand where it exits the tetramer. Each RuvB hexamer is contacted by two RuvA subunits (via domain III) on 2 adjacent RuvB subunits; this complex drives branch migration. In the full resolvosome a probable DNA-RuvA(4)-RuvB(12)-RuvC(2) complex forms which resolves the HJ.

The protein resides in the cytoplasm. Its function is as follows. The RuvA-RuvB-RuvC complex processes Holliday junction (HJ) DNA during genetic recombination and DNA repair, while the RuvA-RuvB complex plays an important role in the rescue of blocked DNA replication forks via replication fork reversal (RFR). RuvA specifically binds to HJ cruciform DNA, conferring on it an open structure. The RuvB hexamer acts as an ATP-dependent pump, pulling dsDNA into and through the RuvAB complex. HJ branch migration allows RuvC to scan DNA until it finds its consensus sequence, where it cleaves and resolves the cruciform DNA. This chain is Holliday junction branch migration complex subunit RuvA, found in Mycoplasma capricolum subsp. capricolum (strain California kid / ATCC 27343 / NCTC 10154).